Here is a 616-residue protein sequence, read N- to C-terminus: Mitochondrial Rho GTPase 2 (616 aa).

Topologically, residues 1 to 590 are cytoplasmic; sequence MKRDVRILLL…HDTELSTASF (590 aa). The 167-residue stretch at 2 to 168 folds into the Miro 1 domain; sequence KRDVRILLLG…FYYAQKAVLH (167 aa). The GTP site is built by Gly16, Lys17, Thr18, and Ser19. Thr18 is a Mg(2+) binding site. Asp57 contacts Mg(2+). GTP-binding residues include Ser59, Asn118, Lys119, Asp121, Ala149, and Lys150. 2 consecutive EF-hand domains span residues 184 to 219 and 304 to 339; these read QCKK…CFGN and FGYQ…FPYT. The Ca(2+) site is built by Asp199, Asn201, Glu208, Asp317, Asp319, Asp321, and Glu328. In terms of domain architecture, Miro 2 spans 416 to 577; the sequence is RNVFLCRVIG…YSKLATAAAF (162 aa). 5 residues coordinate GTP: Gly428, Gly430, Lys431, Ser432, and Ala433. Position 432 (Ser432) interacts with Mg(2+). Position 474 (Glu474) interacts with Mg(2+). Residues Lys528, Asp530, and Cys559 each coordinate GTP. The helical; Anchor for type IV membrane protein transmembrane segment at 591-613 threads the bilayer; that stretch reads WLRVALGATVAAVVGFTLYKALL. Residues 614 to 616 lie on the Mitochondrial intermembrane side of the membrane; that stretch reads RSK.

The protein belongs to the mitochondrial Rho GTPase family. As to quaternary structure, homodimer.

Its subcellular location is the mitochondrion outer membrane. It carries out the reaction GTP + H2O = GDP + phosphate + H(+). It catalyses the reaction ATP + H2O = ADP + phosphate + H(+). The enzyme catalyses UTP + H2O = UDP + phosphate + H(+). In terms of biological role, atypical mitochondrial nucleoside-triphosphatase (NTPase) involved in mitochondrial trafficking. Probably involved in control of anterograde transport of mitochondria and their subcellular distribution. Can hydrolyze GTP, ATP and UTP. The protein is Mitochondrial Rho GTPase 2 (rhot2) of Xenopus tropicalis (Western clawed frog).